A 655-amino-acid polypeptide reads, in one-letter code: D-xylonate dehydratase YjhG (655 aa).

This sequence belongs to the IlvD/Edd family.

The catalysed reaction is D-xylonate = 2-dehydro-3-deoxy-D-arabinonate + H2O. With respect to regulation, activity is increased in the presence of Mn(+) and Mg(2+). Inhibited by thiol compounds. In terms of biological role, catalyzes the dehydration of D-xylonic acid to form 2-dehydro-3-deoxy-D-pentonate. The sequence is that of D-xylonate dehydratase YjhG (yjhG) from Escherichia coli (strain K12).